A 37-amino-acid polypeptide reads, in one-letter code: Large ribosomal subunit protein bL36 (37 aa).

It belongs to the bacterial ribosomal protein bL36 family.

In Mesomycoplasma hyopneumoniae (strain 7448) (Mycoplasma hyopneumoniae), this protein is Large ribosomal subunit protein bL36.